An 849-amino-acid chain; its full sequence is A-kinase anchor protein 4 (849 aa).

Residues 1 to 188 (MIAYCGTTTM…MAASKNTNNN (188 aa)) constitute a propeptide that is removed on maturation. Phosphoserine occurs at positions 96, 130, 190, and 204. Polar residues predominate over residues 183–205 (KNTNNNQSPSNPATKSPSNQRSV). Residues 183-210 (KNTNNNQSPSNPATKSPSNQRSVATPEG) are disordered. At threonine 207 the chain carries Phosphothreonine. 3 positions are modified to phosphoserine: serine 213, serine 226, and serine 271. The PKA-RI and PKA-RII subunit binding domain stretch occupies residues 219–232 (FYVNRLSSLVIQMA). Residue tyrosine 301 is modified to Phosphotyrosine. Phosphoserine is present on residues serine 302, serine 341, serine 431, serine 442, serine 444, serine 463, serine 492, serine 497, and serine 504. Positions 335 to 344 (YANQVASDMM) are PKA-RI-alpha subunit binding domain. Threonine 506 carries the phosphothreonine modification. Serine 538 carries the phosphoserine modification. Serine 583 is modified (phosphoserine; by STK33). Serine 628, serine 633, serine 652, and serine 702 each carry phosphoserine.

It belongs to the AKAP110 family. As to quaternary structure, interacts with PRKAR1A and PRKAR2A. Interacts with ENO4. Interacts with QRICH2. In terms of processing, phosphorylated by STK33 during sperm flagella assembly. In terms of tissue distribution, expressed in the fibrous sheath of spermatozoa (at protein level). Expressed in step 1 to step 6 spermatids, abundance then increases during steps 8 to 12, abundance decreases thereafter.

Its subcellular location is the cell projection. The protein localises to the cilium. It is found in the flagellum. In terms of biological role, major structural component of sperm fibrous sheath. Plays a role in sperm motility. This Mus musculus (Mouse) protein is A-kinase anchor protein 4.